The primary structure comprises 532 residues: Neutral amino acid transporter A (532 aa).

Residue Met-1 is modified to N-acetylmethionine. The interval 1 to 29 (MEKSGETNGYLDGTQAEPAAGPRTPETAM) is disordered. Topologically, residues 1-41 (MEKSGETNGYLDGTQAEPAAGPRTPETAMGKSQRCASFFRR) are cytoplasmic. 3 helical membrane-spanning segments follow: residues 42-62 (HALV…GAAL), 88-108 (MIIL…LDAS), and 119-139 (AYFG…AFII). At 140–216 (KPGAGAQTLQ…VTKEKIPVVT (77 aa)) the chain is on the extracellular side. N-linked (GlcNAc...) asparagine glycosylation is found at Asn-201 and Asn-206. Helical transmembrane passes span 217 to 237 (DVEG…GVAL), 257 to 277 (ATMV…MFLI), 298 to 318 (IFAS…LVYF), 328 to 348 (FLLG…SSAT), 373 to 393 (IGAT…AVFI), and 418 to 438 (VGAA…LEAI). Residues 495–532 (EAIPNSKSEEETSPLVTHQNPAGPVAIAPELESKESVL) form a disordered region. A phosphoserine mark is found at Ser-507, Ser-527, and Ser-530.

The protein belongs to the dicarboxylate/amino acid:cation symporter (DAACS) (TC 2.A.23) family. SLC1A4 subfamily.

It localises to the membrane. The protein resides in the melanosome. The enzyme catalyses L-threonine(in) + Na(+)(in) = L-threonine(out) + Na(+)(out). The catalysed reaction is L-serine(in) + Na(+)(in) = L-serine(out) + Na(+)(out). It carries out the reaction L-cysteine(in) + Na(+)(in) = L-cysteine(out) + Na(+)(out). It catalyses the reaction L-alanine(in) + Na(+)(in) = L-alanine(out) + Na(+)(out). The enzyme catalyses L-proline(in) + Na(+)(in) = L-proline(out) + Na(+)(out). The catalysed reaction is 4-hydroxy-L-proline(in) + Na(+)(in) = 4-hydroxy-L-proline(out) + Na(+)(out). Its function is as follows. Sodium-dependent neutral amino-acid transporter that mediates transport of alanine, serine, cysteine, proline, hydroxyproline and threonine. The protein is Neutral amino acid transporter A (Slc1a4) of Mus musculus (Mouse).